A 466-amino-acid polypeptide reads, in one-letter code: Adenosylhomocysteinase (466 aa).

3 residues coordinate substrate: Thr57, Asp132, and Glu192. Thr193–Thr195 contributes to the NAD(+) binding site. Substrate contacts are provided by Lys222 and Asp226. NAD(+) is bound by residues Asn227, Gly256–Gly261, Glu279, Asn314, Ile335–His337, and Asn380.

The protein belongs to the adenosylhomocysteinase family. NAD(+) serves as cofactor.

The protein resides in the cytoplasm. It carries out the reaction S-adenosyl-L-homocysteine + H2O = L-homocysteine + adenosine. Its pathway is amino-acid biosynthesis; L-homocysteine biosynthesis; L-homocysteine from S-adenosyl-L-homocysteine: step 1/1. May play a key role in the regulation of the intracellular concentration of adenosylhomocysteine. The chain is Adenosylhomocysteinase from Rhizobium leguminosarum bv. trifolii (strain WSM2304).